A 477-amino-acid polypeptide reads, in one-letter code: Bifunctional protein HldE (477 aa).

Residues 1-319 form a ribokinase region; it reads MTVIFPNFSK…NIMNSHICTT (319 aa). 195–198 is an ATP binding site; it reads NISE. Asp264 is a catalytic residue. The tract at residues 346 to 477 is cytidylyltransferase; sequence MTNGVFDILH…NIINAIKRKN (132 aa).

The protein in the N-terminal section; belongs to the carbohydrate kinase PfkB family. This sequence in the C-terminal section; belongs to the cytidylyltransferase family. In terms of assembly, homodimer.

It carries out the reaction D-glycero-beta-D-manno-heptose 7-phosphate + ATP = D-glycero-beta-D-manno-heptose 1,7-bisphosphate + ADP + H(+). The enzyme catalyses D-glycero-beta-D-manno-heptose 1-phosphate + ATP + H(+) = ADP-D-glycero-beta-D-manno-heptose + diphosphate. It participates in nucleotide-sugar biosynthesis; ADP-L-glycero-beta-D-manno-heptose biosynthesis; ADP-L-glycero-beta-D-manno-heptose from D-glycero-beta-D-manno-heptose 7-phosphate: step 1/4. Its pathway is nucleotide-sugar biosynthesis; ADP-L-glycero-beta-D-manno-heptose biosynthesis; ADP-L-glycero-beta-D-manno-heptose from D-glycero-beta-D-manno-heptose 7-phosphate: step 3/4. Its function is as follows. Catalyzes the phosphorylation of D-glycero-D-manno-heptose 7-phosphate at the C-1 position to selectively form D-glycero-beta-D-manno-heptose-1,7-bisphosphate. Catalyzes the ADP transfer from ATP to D-glycero-beta-D-manno-heptose 1-phosphate, yielding ADP-D-glycero-beta-D-manno-heptose. The polypeptide is Bifunctional protein HldE (Blochmanniella pennsylvanica (strain BPEN)).